The following is a 488-amino-acid chain: NADH-ubiquinone oxidoreductase chain 2 (488 aa).

14 consecutive transmembrane segments (helical) span residues 11 to 31 (MIKY…SISI), 38 to 58 (MMLL…LLTI), 74 to 94 (ELIT…ISMF), 106 to 126 (ITEE…ISME), 129 to 149 (NLIT…ILAL), 162 to 182 (LKYY…IVSI), 211 to 231 (IALI…HGWL), 239 to 259 (GMLM…IVLI), 271 to 291 (IEVI…VGTV), 299 to 319 (VIRF…LFFV), 331 to 351 (IYYL…IIGV), 376 to 396 (IGIS…FTNF), 412 to 434 (IYIT…NVVK), and 460 to 480 (IVGG…IISI).

Belongs to the complex I subunit 2 family.

The protein resides in the mitochondrion inner membrane. It carries out the reaction a ubiquinone + NADH + 5 H(+)(in) = a ubiquinol + NAD(+) + 4 H(+)(out). In terms of biological role, core subunit of the mitochondrial membrane respiratory chain NADH dehydrogenase (Complex I) that is believed to belong to the minimal assembly required for catalysis. Complex I functions in the transfer of electrons from NADH to the respiratory chain. The immediate electron acceptor for the enzyme is believed to be ubiquinone. The sequence is that of NADH-ubiquinone oxidoreductase chain 2 (nad2) from Dictyostelium discoideum (Social amoeba).